The sequence spans 161 residues: Nucleotide-binding protein Bxeno_A3642 (161 aa).

Belongs to the YajQ family.

In terms of biological role, nucleotide-binding protein. The chain is Nucleotide-binding protein Bxeno_A3642 from Paraburkholderia xenovorans (strain LB400).